The primary structure comprises 177 residues: Putative zinc finger protein 826 (177 aa).

A C2H2-type 1; degenerate zinc finger spans residues lysine 99–histidine 114. A C2H2-type 2; degenerate zinc finger spans residues tyrosine 120–histidine 142. The segment at cysteine 148–histidine 170 adopts a C2H2-type 3 zinc-finger fold.

The protein resides in the nucleus. Its function is as follows. May be involved in transcriptional regulation. This is Putative zinc finger protein 826 (ZNF826P) from Homo sapiens (Human).